The chain runs to 318 residues: Transaldolase (318 aa).

Residue Lys132 is the Schiff-base intermediate with substrate of the active site.

The protein belongs to the transaldolase family. Type 1 subfamily. In terms of assembly, homodimer.

It localises to the cytoplasm. The catalysed reaction is D-sedoheptulose 7-phosphate + D-glyceraldehyde 3-phosphate = D-erythrose 4-phosphate + beta-D-fructose 6-phosphate. Its pathway is carbohydrate degradation; pentose phosphate pathway; D-glyceraldehyde 3-phosphate and beta-D-fructose 6-phosphate from D-ribose 5-phosphate and D-xylulose 5-phosphate (non-oxidative stage): step 2/3. Functionally, transaldolase is important for the balance of metabolites in the pentose-phosphate pathway. The polypeptide is Transaldolase (Shewanella baltica (strain OS185)).